Here is a 408-residue protein sequence, read N- to C-terminus: MAHITINQYLQQVCEAIDTRDGASLAELVSFKHPHVANPRLQMASPEEKCQQVLEPPYDEMFAAHLRCTYAVGNHDFIEAYKCQTVIVQSFLRAFQAHKEENWALPVMYAVALDLRIFANNADQQLVKKGKSKVGDMLEKAAELLMGCFRVCASDTRAGIEDSKKRGMLFLVNQLFKIYFKINKLHLCKPLIRAIDSSNLKDDYSTAQRVTYRYYVGRKAMFDSDFKQAEEYLSFAFEHCHRSSQKNKRMVLIYLLPVKMLLGHMPTIELLRKYHLMQFAEVTRAVSEGNLLLLNEALAAHETFFIRCGIFLILEKLKIITYRNLFKKVNSLSSASSRYLLLKTHQLSLDAFLVALKFMQVEDVDIAEVQCILANLIYMGHIKGYISHQHQKLVVSKQNPFPPLSTVC.

Residue Ala-2 is modified to N-acetylalanine. Phosphoserine is present on Ser-45. One can recognise a PCI domain in the interval 210-400 (VTYRYYVGRK…QKLVVSKQNP (191 aa)).

The protein belongs to the CSN12 family. Component of the nuclear pore complex (NPC)-associated TREX-2 complex (transcription and export complex 2), composed of at least GANP, 2 copies of ENY2, PCID2, SEM1/DSS1, and either centrin CETN2 or centrin CETN3. The TREX-2 complex also associates with ALYREF/ALY and with the nucleoporin NUP153. Interacts with BRCA2. Interacts with SRCAP chromatin remodeling complex component ZNHIT1; the interaction results in inhibition of SRCAP complex activity, preventing the deposition of histone variant H2AZ1/H2A.Z to lymphoid fate regulator genes and restricting lymphoid lineage commitment.

Its subcellular location is the cytoplasm. It localises to the nucleus. It is found in the nuclear pore complex. Functionally, required for B-cell survival through the regulation of the expression of cell-cycle checkpoint MAD2L1 protein during B cell differentiation. As a component of the TREX-2 complex, involved in the export of mRNAs to the cytoplasm through the nuclear pores. Binds and stabilizes BRCA2 and is thus involved in the control of R-loop-associated DNA damage and transcription-associated genomic instability. Blocks the activity of the SRCAP chromatin remodeling complex by interacting with SRCAP complex member ZNHIT1 and inhibiting its interaction with the complex. This prevents the deposition of histone variant H2AZ1/H2A.Z at the nucleosomes of key lymphoid fate regulator genes which suppresses their expression and restricts lymphoid lineage commitment. The polypeptide is PCI domain-containing protein 2 (PCID2) (Bos taurus (Bovine)).